The sequence spans 111 residues: MSTKYLAAYALASLSKASPSQADVEAICKAVHIDVDQATLAFVMESVTGRDVATLIAEGAAKMSAMPAASSGAAAGVTASAAGDAAPAAAAAKKDEPEEEADDDMGFGLFD.

The segment at alanine 86–aspartate 111 is disordered.

The protein belongs to the eukaryotic ribosomal protein P1/P2 family. P1 and P2 exist as dimers at the large ribosomal subunit. In terms of processing, phosphorylated.

Plays an important role in the elongation step of protein synthesis. In Leishmania infantum, this protein is Large ribosomal subunit protein P2-2 (LIP').